Here is a 389-residue protein sequence, read N- to C-terminus: MGYIGAHGVAALHRYKYSGVDHSYLAKYVLQPFWTRFVKVFPLWMPPNMITLMGFMFLVTSSLLGYIYSPQLDSPPPRWVHFAHGLLLFLYQTFDAVDGKQARRTNSSSPLGELFDHGCDALACAFEAMAFGSTAMCGRDTFWFWVISAIPFYGATWEHYFTNTLILPVINGPTEGLALIFVSHFFTAIVGAEWWAQQLGQSIPLFSWVPFVNEIQTSRAVLYMMIAFAVIPTVAFNVTNVYKVVRSRNGSMVLALAMLYPFVVLLGGVLIWDYLSPINLIATYPHLVVLGTGLAFGFLVGRMILAHLCDEPKGLKTNMCMSLLYLPFALANALTARLNAGVPLVDELWVLLGYCIFTVSLYLHFATSVIHEITEALGIYCFRITRKEA.

The helical transmembrane segment at 40–60 (VFPLWMPPNMITLMGFMFLVT) threads the bilayer. Asparagine 48 contributes to the CDP-choline binding site. 2 residues coordinate Mg(2+): aspartate 95 and aspartate 98. Residue arginine 103 participates in CDP-choline binding. Aspartate 116 serves as a coordination point for Mg(2+). Catalysis depends on histidine 117, which acts as the Proton acceptor. Residue aspartate 120 coordinates Mg(2+). The next 7 helical transmembrane spans lie at 141 to 161 (TFWF…EHYF), 176 to 196 (GLAL…EWWA), 221 to 241 (VLYM…VTNV), 252 to 272 (MVLA…VLIW), 280 to 300 (LIAT…GFLV), 322 to 344 (SLLY…GVPL), and 350 to 370 (VLLG…TSVI).

The protein belongs to the CDP-alcohol phosphatidyltransferase class-I family. Requires Mg(2+) as cofactor. Mn(2+) serves as cofactor.

It localises to the membrane. The catalysed reaction is CDP-ethanolamine + a 1,2-diacyl-sn-glycerol = a 1,2-diacyl-sn-glycero-3-phosphoethanolamine + CMP + H(+). It catalyses the reaction CDP-choline + a 1,2-diacyl-sn-glycerol = a 1,2-diacyl-sn-glycero-3-phosphocholine + CMP + H(+). The protein operates within phospholipid metabolism; phosphatidylethanolamine biosynthesis; phosphatidylethanolamine from ethanolamine: step 3/3. Its pathway is phospholipid metabolism; phosphatidylcholine biosynthesis; phosphatidylcholine from phosphocholine: step 2/2. In terms of biological role, catalyzes both phosphatidylcholine and phosphatidylethanolamine biosynthesis from CDP-choline and CDP-ethanolamine, respectively. Has a higher cholinephosphotransferase activity than ethanolaminephosphotransferase activity. The protein is Choline/ethanolaminephosphotransferase 1 (AAPT1) of Arabidopsis thaliana (Mouse-ear cress).